Reading from the N-terminus, the 396-residue chain is Elongation factor Tu (396 aa).

Residues 11-205 (KPHVNIGTIG…TVDEYIPTPE (195 aa)) form the tr-type G domain. The G1 stretch occupies residues 20 to 27 (GHVDHGKT). 20 to 27 (GHVDHGKT) lines the GTP pocket. T27 lines the Mg(2+) pocket. Positions 61–65 (GITIN) are G2. Positions 82-85 (DAPG) are G3. GTP contacts are provided by residues 82-86 (DAPGH) and 137-140 (NKCD). The tract at residues 137–140 (NKCD) is G4. The segment at 175-177 (SAL) is G5.

The protein belongs to the TRAFAC class translation factor GTPase superfamily. Classic translation factor GTPase family. EF-Tu/EF-1A subfamily. Monomer.

The protein resides in the cytoplasm. It catalyses the reaction GTP + H2O = GDP + phosphate + H(+). In terms of biological role, GTP hydrolase that promotes the GTP-dependent binding of aminoacyl-tRNA to the A-site of ribosomes during protein biosynthesis. This chain is Elongation factor Tu, found in Lactobacillus helveticus (strain DPC 4571).